The sequence spans 180 residues: RNA polymerase sigma-E factor (180 aa).

The short motif at 36–49 (DLLQTALARTYGRW) is the Polymerase core binding element. Positions 130–149 (TEETAAALGMSAGTVKSTLH) form a DNA-binding region, H-T-H motif.

This sequence belongs to the sigma-70 factor family. ECF subfamily.

It localises to the cytoplasm. Sigma factors are initiation factors that promote the attachment of RNA polymerase to specific initiation sites and are then released. This sigma factor is required for the synthesis of the antibiotic actinomycin. In Streptomyces antibioticus, this protein is RNA polymerase sigma-E factor (sigE).